We begin with the raw amino-acid sequence, 230 residues long: Cytidylate kinase (230 aa).

ATP is bound at residue 12–20 (GPSGAGKGT).

The protein belongs to the cytidylate kinase family. Type 1 subfamily.

It is found in the cytoplasm. The enzyme catalyses CMP + ATP = CDP + ADP. It catalyses the reaction dCMP + ATP = dCDP + ADP. The protein is Cytidylate kinase of Shewanella sp. (strain MR-4).